Reading from the N-terminus, the 159-residue chain is Aspartate carbamoyltransferase regulatory chain (159 aa).

The Zn(2+) site is built by Cys-111, Cys-116, Cys-141, and Cys-144.

The protein belongs to the PyrI family. In terms of assembly, contains catalytic and regulatory chains. Zn(2+) is required as a cofactor.

Functionally, involved in allosteric regulation of aspartate carbamoyltransferase. This is Aspartate carbamoyltransferase regulatory chain from Aeropyrum pernix (strain ATCC 700893 / DSM 11879 / JCM 9820 / NBRC 100138 / K1).